A 436-amino-acid polypeptide reads, in one-letter code: Trigger factor (436 aa).

Residues 163–248 (GDQVIIDFVG…VHSVQTKVLP (86 aa)) form the PPIase FKBP-type domain.

This sequence belongs to the FKBP-type PPIase family. Tig subfamily.

Its subcellular location is the cytoplasm. The enzyme catalyses [protein]-peptidylproline (omega=180) = [protein]-peptidylproline (omega=0). Its function is as follows. Involved in protein export. Acts as a chaperone by maintaining the newly synthesized protein in an open conformation. Functions as a peptidyl-prolyl cis-trans isomerase. The chain is Trigger factor from Hydrogenovibrio crunogenus (strain DSM 25203 / XCL-2) (Thiomicrospira crunogena).